A 250-amino-acid polypeptide reads, in one-letter code: Ubiquinone/menaquinone biosynthesis C-methyltransferase UbiE (250 aa).

S-adenosyl-L-methionine is bound by residues Thr-73, Asp-94, 122–123 (NA), and Ser-139.

Belongs to the class I-like SAM-binding methyltransferase superfamily. MenG/UbiE family.

It carries out the reaction a 2-demethylmenaquinol + S-adenosyl-L-methionine = a menaquinol + S-adenosyl-L-homocysteine + H(+). The catalysed reaction is a 2-methoxy-6-(all-trans-polyprenyl)benzene-1,4-diol + S-adenosyl-L-methionine = a 5-methoxy-2-methyl-3-(all-trans-polyprenyl)benzene-1,4-diol + S-adenosyl-L-homocysteine + H(+). The protein operates within quinol/quinone metabolism; menaquinone biosynthesis; menaquinol from 1,4-dihydroxy-2-naphthoate: step 2/2. It functions in the pathway cofactor biosynthesis; ubiquinone biosynthesis. Methyltransferase required for the conversion of demethylmenaquinol (DMKH2) to menaquinol (MKH2) and the conversion of 2-polyprenyl-6-methoxy-1,4-benzoquinol (DDMQH2) to 2-polyprenyl-3-methyl-6-methoxy-1,4-benzoquinol (DMQH2). The protein is Ubiquinone/menaquinone biosynthesis C-methyltransferase UbiE of Francisella philomiragia subsp. philomiragia (strain ATCC 25017 / CCUG 19701 / FSC 153 / O#319-036).